Reading from the N-terminus, the 270-residue chain is Phospholysine phosphohistidine inorganic pyrophosphate phosphatase (270 aa).

The Mg(2+) site is built by D17 and S19. Residues 17–19 (DIS), 54–55 (TN), and K189 each bind substrate. D214 serves as a coordination point for Mg(2+).

Belongs to the HAD-like hydrolase superfamily. As to quaternary structure, homodimer. The cofactor is Mg(2+). In terms of tissue distribution, expressed in brain, and at lower levels in liver and kidney. Detected in thyroid (at protein level). Expressed in liver, kidney and moderately in brain.

It is found in the cytoplasm. It localises to the nucleus. The enzyme catalyses diphosphate + H2O = 2 phosphate + H(+). Functionally, phosphatase that hydrolyzes imidodiphosphate, 3-phosphohistidine and 6-phospholysine. Has broad substrate specificity and can also hydrolyze inorganic diphosphate, but with lower efficiency. In Homo sapiens (Human), this protein is Phospholysine phosphohistidine inorganic pyrophosphate phosphatase (LHPP).